Here is a 314-residue protein sequence, read N- to C-terminus: Testisin (314 aa).

The first 19 residues, 1–19 (MGARGALLLALLLARAGLR), serve as a signal peptide directing secretion. Residues 20 to 41 (KPESQEAAPLSGPCGRRVITSR) constitute a propeptide that is removed on maturation. Disulfide bonds link Cys-33-Cys-157 and Cys-67-Cys-83. The region spanning 42–286 (IVGGEDAELG…HFEWIQKLMA (245 aa)) is the Peptidase S1 domain. Residues His-82 and Asp-137 each act as charge relay system in the active site. Residues Asn-167 and Asn-200 are each glycosylated (N-linked (GlcNAc...) asparagine). Cystine bridges form between Cys-171–Cys-244, Cys-204–Cys-223, and Cys-234–Cys-262. Ser-238 (charge relay system) is an active-site residue. An N-linked (GlcNAc...) asparagine glycan is attached at Asn-273. Residue Ser-288 is the site of GPI-anchor amidated serine attachment. The propeptide at 289 to 314 (GMSQPDPSWPLLFFPLLWALPLLGPV) is removed in mature form.

This sequence belongs to the peptidase S1 family. In terms of tissue distribution, expressed predominantly in premeiotic testicular germ cells, mostly late pachytene and diplotene spermatocytes.

The protein localises to the cell membrane. In terms of biological role, could regulate proteolytic events associated with testicular germ cell maturation. In Homo sapiens (Human), this protein is Testisin (PRSS21).